The chain runs to 293 residues: MTTIPSSATSATKTLGGTELARGIRAEVTSAAAELTLLGVTPRLAVVVATDDESSAWYVRSIARAAAKSGLLCDIVDLGADATTQSIRAELQRLSADPAVHGIILQTPLPAGANFEDLAASIAPDKDVDGANPLSLGRLAAGLPAYAPATAAAVLALLDHHEVPLAGRTGVVVGRSNVVGKPAAQLLLQRDATVTVCHRYTQNLGHHTRTADVLVVAVGRPGLITAQHVAEHTVVIDVGTNPTDDGGLVGDVDETSVSGRVAGLTPVPGGVGPVTTALLLQHTIQSASRSEPS.

NADP(+) is bound by residues 174–176 (GRS) and Thr-240.

It belongs to the tetrahydrofolate dehydrogenase/cyclohydrolase family. As to quaternary structure, homodimer.

It carries out the reaction (6R)-5,10-methylene-5,6,7,8-tetrahydrofolate + NADP(+) = (6R)-5,10-methenyltetrahydrofolate + NADPH. The catalysed reaction is (6R)-5,10-methenyltetrahydrofolate + H2O = (6R)-10-formyltetrahydrofolate + H(+). It functions in the pathway one-carbon metabolism; tetrahydrofolate interconversion. Functionally, catalyzes the oxidation of 5,10-methylenetetrahydrofolate to 5,10-methenyltetrahydrofolate and then the hydrolysis of 5,10-methenyltetrahydrofolate to 10-formyltetrahydrofolate. The protein is Bifunctional protein FolD 1 of Saccharopolyspora erythraea (strain ATCC 11635 / DSM 40517 / JCM 4748 / NBRC 13426 / NCIMB 8594 / NRRL 2338).